We begin with the raw amino-acid sequence, 369 residues long: MPKMVHRSKTRPVRVGDLVIGGNNEVIIQSMTTTKTHDVEATVAEILRLEEAGCQIVRVACPEERDALALAEIKSRINIPLVVDIHFNYKLALMAIEAGVDKIRINPGNIGRREKVEAVVTAAKAKNIPIRIGVNAGSLEKHILEKYGYPTARGMVESALHHIKILEDLDFHDIIVSLKASDVQLALEAYQLASESFDYPLHVGITESGPLRTGSLKSAAGLGAILSRGIGNTVRVSLSADPVEEVKVAKEVLKSFGLAANAATLISCPTCGRIEIDLMAIAAEIEDYIDKIQVNIKVAVLGCAVNGPGEAREADIGIAGARNEGLLFRHGEIIRKVPEATMVEELKKEIDAIVLEKEAEKEAAKASQA.

[4Fe-4S] cluster contacts are provided by C268, C271, C303, and E310.

The protein belongs to the IspG family. The cofactor is [4Fe-4S] cluster.

The enzyme catalyses (2E)-4-hydroxy-3-methylbut-2-enyl diphosphate + oxidized [flavodoxin] + H2O + 2 H(+) = 2-C-methyl-D-erythritol 2,4-cyclic diphosphate + reduced [flavodoxin]. It functions in the pathway isoprenoid biosynthesis; isopentenyl diphosphate biosynthesis via DXP pathway; isopentenyl diphosphate from 1-deoxy-D-xylulose 5-phosphate: step 5/6. In terms of biological role, converts 2C-methyl-D-erythritol 2,4-cyclodiphosphate (ME-2,4cPP) into 1-hydroxy-2-methyl-2-(E)-butenyl 4-diphosphate. The sequence is that of 4-hydroxy-3-methylbut-2-en-1-yl diphosphate synthase (flavodoxin) from Exiguobacterium sibiricum (strain DSM 17290 / CCUG 55495 / CIP 109462 / JCM 13490 / 255-15).